Reading from the N-terminus, the 101-residue chain is Small ribosomal subunit protein bS6 (101 aa).

This sequence belongs to the bacterial ribosomal protein bS6 family.

Functionally, binds together with bS18 to 16S ribosomal RNA. The polypeptide is Small ribosomal subunit protein bS6 (Staphylococcus saprophyticus subsp. saprophyticus (strain ATCC 15305 / DSM 20229 / NCIMB 8711 / NCTC 7292 / S-41)).